Consider the following 298-residue polypeptide: Tyrosine recombinase XerC (298 aa).

Residues 1-84 (MNHIQEAFLN…TLRTFYEYWM (84 aa)) form the Core-binding (CB) domain. Positions 105 to 286 (YLPQFFYEEE…SNQQLRKVYL (182 aa)) constitute a Tyr recombinase domain. Catalysis depends on residues R145, K169, H238, R241, and H264. Y273 acts as the O-(3'-phospho-DNA)-tyrosine intermediate in catalysis.

The protein belongs to the 'phage' integrase family. XerC subfamily. As to quaternary structure, forms a cyclic heterotetrameric complex composed of two molecules of XerC and two molecules of XerD.

The protein localises to the cytoplasm. In terms of biological role, site-specific tyrosine recombinase, which acts by catalyzing the cutting and rejoining of the recombining DNA molecules. The XerC-XerD complex is essential to convert dimers of the bacterial chromosome into monomers to permit their segregation at cell division. It also contributes to the segregational stability of plasmids. This is Tyrosine recombinase XerC from Staphylococcus aureus (strain JH1).